A 310-amino-acid chain; its full sequence is Elongation factor Ts, mitochondrial (310 aa).

The N-terminal 42 residues, Met1–Tyr42, are a transit peptide targeting the mitochondrion.

The protein belongs to the EF-Ts family.

The protein resides in the mitochondrion. Functionally, associates with the EF-Tu.GDP complex and induces the exchange of GDP to GTP. It remains bound to the aminoacyl-tRNA.EF-Tu.GTP complex up to the GTP hydrolysis stage on the ribosome. This is Elongation factor Ts, mitochondrial (tsf1) from Schizosaccharomyces japonicus (strain yFS275 / FY16936) (Fission yeast).